We begin with the raw amino-acid sequence, 416 residues long: Protein LAZY 1 (416 aa).

Residues 63-83 (FTFGGSGLLTIGTLGIAAVAI) traverse the membrane as a helical segment. The IGT motif motif lies at 69-75 (GLLTIGT). 2 disordered regions span residues 266–306 (AAAA…GMPA) and 337–361 (KKSR…DGPL). Gly residues predominate over residues 270–282 (GVGGDRAGKGGGY). Positions 278–295 (KGGGYKTMKKRKVKDEKG) match the Nuclear localization signal motif.

This sequence belongs to the LAZY family. As to expression, expressed specifically in the cells at the inner side of the vascular bundles of young leaf sheaths and peripheral cylinders of vascular bundles in the unelongated stems. Expressed in the leaf sheath pulvinus and the lamina joint.

It is found in the cell membrane. Its subcellular location is the nucleus. Involved in the regulation of shoot gravitropism and tiller angle through negative regulation of basipetal polar auxin transport (PAT). Acts as positive regulator of lateral auxin transport. Promotes vertical shoot growth. LAZY1 and TAC1 play opposite functions in the regulation of tiller growth angle. The sequence is that of Protein LAZY 1 from Oryza sativa subsp. japonica (Rice).